The following is a 411-amino-acid chain: Cytochrome P450 monooxygenase sirE (411 aa).

N-linked (GlcNAc...) asparagine glycans are attached at residues N12 and N149. Residues F181 to A203 form a helical membrane-spanning segment. A glycan (N-linked (GlcNAc...) asparagine) is linked at N342. C352 serves as a coordination point for heme.

This sequence belongs to the cytochrome P450 family. It depends on heme as a cofactor.

Its subcellular location is the membrane. It participates in mycotoxin biosynthesis. Functionally, cytochrome P450 monooxygenase; part of the gene cluster that mediates the biosynthesis of sirodesmin PL, an epipolythiodioxopiperazine (ETP) characterized by a disulfide bridged cyclic dipeptide and that acts as a phytotoxin which is involved in the blackleg didease of canola. SirD catalyzes the O-prenylation of L-tyrosine (L-Tyr) in the presence of dimethylallyl diphosphate (DMAPP) to yield 4-O-dimethylallyl-L-Tyr, and therefore represents probably the first pathway-specific enzyme in the biosynthesis of sirodesmin PL. 4-O-dimethylallyl-L-Tyr, then undergoes condensation with L-Ser in a reaction catalyzed by the non-ribosomal peptide synthase sirP to form the diketopiperazine (DKP) backbone. Further bishydroxylation of the DKP performed by the cytochrome P450 monooxygenase sirC leads to the production of the intermediate phomamide. This step is essential to form the reactive thiol group required for toxicity of sirodesmin PL. The next steps of sirodesmin biosynthesis are not well understood yet, but some predictions could be made from intermediate compounds identification. Phomamide is converted into phomalizarine via oxidation, probably by sirT. Further oxidation, methylation (by sirM or sirN) and reduction steps convert phomalizarine to deacetyl sirodesmin. Finally, acetyltransferase sirH probably acetylates deacetyl sirodesmin to produce sirodesmin PL. The chain is Cytochrome P450 monooxygenase sirE from Leptosphaeria maculans (Blackleg fungus).